The sequence spans 310 residues: tRNA dimethylallyltransferase (310 aa).

Position 10–17 (10–17 (GPTAVGKS)) interacts with ATP. 12 to 17 (TAVGKS) is a binding site for substrate. Interaction with substrate tRNA regions lie at residues 35–38 (DSAQ), 159–163 (QRIQR), and 274–281 (KRQITWLR).

The protein belongs to the IPP transferase family. In terms of assembly, monomer. The cofactor is Mg(2+).

The catalysed reaction is adenosine(37) in tRNA + dimethylallyl diphosphate = N(6)-dimethylallyladenosine(37) in tRNA + diphosphate. Its function is as follows. Catalyzes the transfer of a dimethylallyl group onto the adenine at position 37 in tRNAs that read codons beginning with uridine, leading to the formation of N6-(dimethylallyl)adenosine (i(6)A). This chain is tRNA dimethylallyltransferase, found in Halorhodospira halophila (strain DSM 244 / SL1) (Ectothiorhodospira halophila (strain DSM 244 / SL1)).